A 145-amino-acid chain; its full sequence is D-aminoacyl-tRNA deacylase (145 aa).

A Gly-cisPro motif, important for rejection of L-amino acids motif is present at residues 137-138 (GP).

Belongs to the DTD family. In terms of assembly, homodimer.

It is found in the cytoplasm. It carries out the reaction glycyl-tRNA(Ala) + H2O = tRNA(Ala) + glycine + H(+). It catalyses the reaction a D-aminoacyl-tRNA + H2O = a tRNA + a D-alpha-amino acid + H(+). In terms of biological role, an aminoacyl-tRNA editing enzyme that deacylates mischarged D-aminoacyl-tRNAs. Also deacylates mischarged glycyl-tRNA(Ala), protecting cells against glycine mischarging by AlaRS. Acts via tRNA-based rather than protein-based catalysis; rejects L-amino acids rather than detecting D-amino acids in the active site. By recycling D-aminoacyl-tRNA to D-amino acids and free tRNA molecules, this enzyme counteracts the toxicity associated with the formation of D-aminoacyl-tRNA entities in vivo and helps enforce protein L-homochirality. In Brevibacillus brevis (strain 47 / JCM 6285 / NBRC 100599), this protein is D-aminoacyl-tRNA deacylase.